We begin with the raw amino-acid sequence, 340 residues long: Cell invasion protein SipD (340 aa).

Disordered stretches follow at residues 1–26 and 57–76; these read MLNI…PSAS and QAQQ…NDER. Residues 291–319 are a coiled coil; sequence FKAQEENLKTTLQTLTQKYSNANSLYDNL.

It belongs to the invasin protein D family.

It is found in the secreted. In terms of biological role, required for translocation of effector proteins via the type III secretion system SPI-1, which is essential for an efficient bacterial internalization. Probably acts by modulating the secretion of SipA, SipB, and SipC. This chain is Cell invasion protein SipD (sipD), found in Salmonella typhi.